Reading from the N-terminus, the 120-residue chain is MDIFLCPVCQSGYRYFYTLYLPNNNIDVILFCDECECVWIDPEYIDYQDAVSNDFLVDKYKVTSCKILFNKEISGWSTNKDIKNSRWDNFIENYEQFVFQNIYHLDKNKRYPFLYLYATN.

The protein resides in the virion. This is an uncharacterized protein from Acanthamoeba polyphaga mimivirus (APMV).